Reading from the N-terminus, the 118-residue chain is Large ribosomal subunit protein bL20 (118 aa).

Belongs to the bacterial ribosomal protein bL20 family.

Its function is as follows. Binds directly to 23S ribosomal RNA and is necessary for the in vitro assembly process of the 50S ribosomal subunit. It is not involved in the protein synthesizing functions of that subunit. In Azotobacter vinelandii, this protein is Large ribosomal subunit protein bL20.